The chain runs to 89 residues: Cell division topological specificity factor (89 aa).

The protein belongs to the MinE family.

In terms of biological role, prevents the cell division inhibition by proteins MinC and MinD at internal division sites while permitting inhibition at polar sites. This ensures cell division at the proper site by restricting the formation of a division septum at the midpoint of the long axis of the cell. The sequence is that of Cell division topological specificity factor from Laribacter hongkongensis (strain HLHK9).